The following is a 263-amino-acid chain: 4-hydroxy-tetrahydrodipicolinate reductase (263 aa).

Residues G8–M13, D34, G99–T101, and S125–Y128 contribute to the NAD(+) site. H157 acts as the Proton donor/acceptor in catalysis. A (S)-2,3,4,5-tetrahydrodipicolinate-binding site is contributed by H158. K161 functions as the Proton donor in the catalytic mechanism. G167–T168 is a (S)-2,3,4,5-tetrahydrodipicolinate binding site.

Belongs to the DapB family.

It localises to the cytoplasm. The catalysed reaction is (S)-2,3,4,5-tetrahydrodipicolinate + NAD(+) + H2O = (2S,4S)-4-hydroxy-2,3,4,5-tetrahydrodipicolinate + NADH + H(+). The enzyme catalyses (S)-2,3,4,5-tetrahydrodipicolinate + NADP(+) + H2O = (2S,4S)-4-hydroxy-2,3,4,5-tetrahydrodipicolinate + NADPH + H(+). It functions in the pathway amino-acid biosynthesis; L-lysine biosynthesis via DAP pathway; (S)-tetrahydrodipicolinate from L-aspartate: step 4/4. Its function is as follows. Catalyzes the conversion of 4-hydroxy-tetrahydrodipicolinate (HTPA) to tetrahydrodipicolinate. The chain is 4-hydroxy-tetrahydrodipicolinate reductase from Methanosarcina barkeri (strain Fusaro / DSM 804).